The chain runs to 508 residues: Photosystem II CP47 reaction center protein (508 aa).

The next 6 membrane-spanning stretches (helical) occupy residues 21–36 (SVHI…WAGS), 101–115 (IVFS…IWHW), 140–156 (GIHL…FGAF), 203–218 (IAAG…FHLS), 237–252 (VLSS…AFVV), and 457–472 (SFAL…HGSR).

This sequence belongs to the PsbB/PsbC family. PsbB subfamily. In terms of assembly, PSII is composed of 1 copy each of membrane proteins PsbA, PsbB, PsbC, PsbD, PsbE, PsbF, PsbH, PsbI, PsbJ, PsbK, PsbL, PsbM, PsbT, PsbX, PsbY, PsbZ, Psb30/Ycf12, at least 3 peripheral proteins of the oxygen-evolving complex and a large number of cofactors. It forms dimeric complexes. The cofactor is Binds multiple chlorophylls. PSII binds additional chlorophylls, carotenoids and specific lipids..

It localises to the plastid. The protein resides in the chloroplast thylakoid membrane. Functionally, one of the components of the core complex of photosystem II (PSII). It binds chlorophyll and helps catalyze the primary light-induced photochemical processes of PSII. PSII is a light-driven water:plastoquinone oxidoreductase, using light energy to abstract electrons from H(2)O, generating O(2) and a proton gradient subsequently used for ATP formation. The polypeptide is Photosystem II CP47 reaction center protein (Fagopyrum esculentum subsp. ancestrale (Wild buckwheat)).